Consider the following 232-residue polypeptide: 7-cyano-7-deazaguanine synthase (232 aa).

7-17 (CSGGLDSVSLA) provides a ligand contact to ATP. Zn(2+) is bound by residues cysteine 185, cysteine 193, cysteine 196, and cysteine 199.

Belongs to the QueC family. The cofactor is Zn(2+).

It catalyses the reaction 7-carboxy-7-deazaguanine + NH4(+) + ATP = 7-cyano-7-deazaguanine + ADP + phosphate + H2O + H(+). It functions in the pathway purine metabolism; 7-cyano-7-deazaguanine biosynthesis. Functionally, catalyzes the ATP-dependent conversion of 7-carboxy-7-deazaguanine (CDG) to 7-cyano-7-deazaguanine (preQ(0)). In Brucella abortus (strain S19), this protein is 7-cyano-7-deazaguanine synthase.